The following is a 338-amino-acid chain: Lipoate-protein ligase A (338 aa).

The 188-residue stretch at proline 29–valine 216 folds into the BPL/LPL catalytic domain. Residues arginine 71, glycine 76 to phenylalanine 79, and lysine 134 each bind ATP. (R)-lipoate is bound at residue lysine 134.

It belongs to the LplA family. Monomer.

The protein localises to the cytoplasm. It catalyses the reaction L-lysyl-[lipoyl-carrier protein] + (R)-lipoate + ATP = N(6)-[(R)-lipoyl]-L-lysyl-[lipoyl-carrier protein] + AMP + diphosphate + H(+). The protein operates within protein modification; protein lipoylation via exogenous pathway; protein N(6)-(lipoyl)lysine from lipoate: step 1/2. It participates in protein modification; protein lipoylation via exogenous pathway; protein N(6)-(lipoyl)lysine from lipoate: step 2/2. Functionally, catalyzes both the ATP-dependent activation of exogenously supplied lipoate to lipoyl-AMP and the transfer of the activated lipoyl onto the lipoyl domains of lipoate-dependent enzymes. The polypeptide is Lipoate-protein ligase A (Salmonella agona (strain SL483)).